The sequence spans 209 residues: Tektin bundle-interacting protein 1 (209 aa).

As to quaternary structure, microtubule inner protein component of sperm flagellar doublet microtubules.

Its subcellular location is the cytoplasm. The protein resides in the cytoskeleton. It is found in the cilium axoneme. It localises to the flagellum axoneme. In terms of biological role, microtubule inner protein (MIP) part of the dynein-decorated doublet microtubules (DMTs) in cilia axoneme, which is required for motile cilia beating. Located at the center of the tektin bundle where may function to recruit tektins or stabilize the bundle. The sequence is that of Tektin bundle-interacting protein 1 (TEKTIP1) from Macaca fascicularis (Crab-eating macaque).